A 558-amino-acid polypeptide reads, in one-letter code: Atlastin-1 (558 aa).

Residues 1-28 are disordered; that stretch reads MAKNRRDRNSWGGFSEKTYEWSSEEEEP. An N-terminal hypervariable region (HVR) region spans residues 1-34; that stretch reads MAKNRRDRNSWGGFSEKTYEWSSEEEEPVKKAGP. Topologically, residues 1–449 are cytoplasmic; that stretch reads MAKNRRDRNS…NIFHAARTPA (449 aa). Phosphoserine is present on residues serine 10, serine 22, and serine 23. The GB1/RHD3-type G domain maps to 64 to 309; it reads DKEVVAVSVA…LIPWLLSPES (246 aa). GDP-binding residues include arginine 77, lysine 78, glycine 79, lysine 80, serine 81, phenylalanine 82, glutamine 148, arginine 217, aspartate 218, valine 276, and asparagine 279. 6 residues coordinate GTP: arginine 77, lysine 78, glycine 79, lysine 80, serine 81, and phenylalanine 82. Serine 81 contacts Mg(2+). The GTP site is built by arginine 217, aspartate 218, and valine 276. The tract at residues 347–438 is 3HB (three-helix bundle) domain; that stretch reads MLQATAEANN…YIQYIKHNDS (92 aa). N6-acetyllysine is present on lysine 395. The stretch at 418-439 forms a coiled coil; the sequence is LQQLETEIDELYIQYIKHNDSK. The segment at 439–447 is linker; it reads KNIFHAART. The chain crosses the membrane as a helical span at residues 450–470; it reads TLFVVIFITYVIAGVTGFIGL. Residue aspartate 471 is a topological domain, lumenal. The helical transmembrane segment at 472-492 threads the bilayer; that stretch reads IIASLCNMIMGLTLITLCTWA. Residues 493–558 are Cytoplasmic-facing; sequence YIRYSGEYRE…STEQSEKKKM (66 aa). An autoinhibitory domain region spans residues 521-558; that stretch reads NEALYKLYSAAATHRHLYHQAFPAPKSESTEQSEKKKM.

The protein belongs to the TRAFAC class dynamin-like GTPase superfamily. GB1/RHD3 GTPase family. GB1 subfamily. As to quaternary structure, monomeric and homodimeric. The homodimer, transiently formed by two molecules on opposing membranes, is the active form mediating ER membrane fusion. Interacts with REEP1, REEP5, RTN3 and RTN4 (via the transmembrane region); these proteins are involved in endoplasmic reticulum tubular network organization. Interacts with ZFYVE27; both proteins are involved in endoplasmic reticulum tubular network organization. Interacts with ARL6IP1; both proteins are involved in endoplasmic reticulum tubular network organization. Interacts with SPAST; the interaction is direct, could recruit SPAST to Golgi membranes. Interacts (via N-terminal region) with MAP4K4 (via CNH regulatory domain). May interact with TMED2. Interacts with CPT1C. Post-translationally, phosphorylated. Phosphorylation, by different kinases, of the N-terminal hypervariable region (HVR) regulates the ATL1-mediated membrane tethering step.

It is found in the endoplasmic reticulum membrane. The protein localises to the golgi apparatus membrane. It localises to the cell projection. The protein resides in the axon. The enzyme catalyses GTP + H2O = GDP + phosphate + H(+). In terms of biological role, atlastin-1 (ATL1) is a membrane-anchored GTPase that mediates the GTP-dependent fusion of endoplasmic reticulum (ER) membranes, maintaining the continuous ER network. It facilitates the formation of three-way junctions where ER tubules intersect. Two atlastin-1 on neighboring ER tubules bind GTP and form loose homodimers through the GB1/RHD3-type G domains and 3HB regions. Upon GTP hydrolysis, the 3HB regions tighten, pulling the membranes together to drive their fusion. After fusion, the homodimer disassembles upon release of inorganic phosphate (Pi). Subsequently, GDP dissociates, resetting the monomers to a conformation ready for a new fusion cycle. May also regulate more or less directly Golgi biogenesis. Indirectly regulates axonal development. In Bos taurus (Bovine), this protein is Atlastin-1.